The chain runs to 558 residues: MTLKKRSSAPELPTSLDEDEEEDSPQPLSNTPFFSMKNLIVATPIILTPLLYGYNLGFVGPYSTMYGYASNCQLYSAKKSCETLTAAKCRWFNASTYVSNTTYGEVCGWADRTTCFLKYSDEAGCLSDSACKWSYSANTCGNQVGYSSIQSGVFAGSLVIGSTMGALMGGYLTKRLDYCKSFLFIGLLSVIGNVLTHVATGLFHYWVLFVARIVLGFPLGWQSITSSHYTDKFAPANHAKTLGTLFQVSVSTGIFVTSFFGLVLGNTIQYDAASNANTMGRMQGLVSVSTLLSIFVVFLPLITKDGYSKSRRGDYEGENSEDASRKAAEEYTMTQMIGPILNGVAMGCVTQLTGINANMNFAPTIMSNLGLQPLVGNIIVMAWNMLATFCVIPLSRRFSMRTLFLFCGFVGSLCCVFLGGIPVYPGVTKSDKAISGIAITGIAIFIALYEMGVGPCFYVLAVDVFPESFRPIGSSITVGVMFIFNLIINICYPIATEGISGGPSGNPNKGQAVAFIFFGCIGVVACVIEYFFLQPWVEPEAKMTDDLDGAAVPEGKHD.

Residues 1 to 28 (MTLKKRSSAPELPTSLDEDEEEDSPQPL) form a disordered region. Over 1–38 (MTLKKRSSAPELPTSLDEDEEEDSPQPLSNTPFFSMKN) the chain is Cytoplasmic. A helical membrane pass occupies residues 39–59 (LIVATPIILTPLLYGYNLGFV). Residues 60-152 (GPYSTMYGYA…QVGYSSIQSG (93 aa)) are Extracellular-facing. Residues 153-173 (VFAGSLVIGSTMGALMGGYLT) form a helical membrane-spanning segment. Over 174-179 (KRLDYC) the chain is Cytoplasmic. A helical membrane pass occupies residues 180–200 (KSFLFIGLLSVIGNVLTHVAT). The Extracellular segment spans residues 201–204 (GLFH). A helical membrane pass occupies residues 205-225 (YWVLFVARIVLGFPLGWQSIT). Residues 226-241 (SSHYTDKFAPANHAKT) lie on the Cytoplasmic side of the membrane. A helical membrane pass occupies residues 242–262 (LGTLFQVSVSTGIFVTSFFGL). Over 263–281 (VLGNTIQYDAASNANTMGR) the chain is Extracellular. Residues 282-302 (MQGLVSVSTLLSIFVVFLPLI) traverse the membrane as a helical segment. Topologically, residues 303 to 335 (TKDGYSKSRRGDYEGENSEDASRKAAEEYTMTQ) are cytoplasmic. Residues 336-356 (MIGPILNGVAMGCVTQLTGIN) traverse the membrane as a helical segment. Residues 357–373 (ANMNFAPTIMSNLGLQP) are Extracellular-facing. A helical membrane pass occupies residues 374 to 394 (LVGNIIVMAWNMLATFCVIPL). Residues 395–402 (SRRFSMRT) are Cytoplasmic-facing. Residues 403 to 423 (LFLFCGFVGSLCCVFLGGIPV) traverse the membrane as a helical segment. Over 424–441 (YPGVTKSDKAISGIAITG) the chain is Extracellular. A helical transmembrane segment spans residues 442–463 (IAIFIALYEMGVGPCFYVLAVD). The Cytoplasmic segment spans residues 464–478 (VFPESFRPIGSSITV). Residues 479 to 499 (GVMFIFNLIINICYPIATEGI) traverse the membrane as a helical segment. Residues 500 to 512 (SGGPSGNPNKGQA) lie on the Extracellular side of the membrane. A helical transmembrane segment spans residues 513–533 (VAFIFFGCIGVVACVIEYFFL). The Cytoplasmic segment spans residues 534–558 (QPWVEPEAKMTDDLDGAAVPEGKHD).

Belongs to the major facilitator superfamily. Sugar transporter (TC 2.A.1.1) family.

It localises to the membrane. The protein is Membrane transporter D2 of Leishmania donovani.